Reading from the N-terminus, the 211-residue chain is Probable nicotinate-nucleotide adenylyltransferase (211 aa).

This sequence belongs to the NadD family.

The catalysed reaction is nicotinate beta-D-ribonucleotide + ATP + H(+) = deamido-NAD(+) + diphosphate. It functions in the pathway cofactor biosynthesis; NAD(+) biosynthesis; deamido-NAD(+) from nicotinate D-ribonucleotide: step 1/1. In terms of biological role, catalyzes the reversible adenylation of nicotinate mononucleotide (NaMN) to nicotinic acid adenine dinucleotide (NaAD). The sequence is that of Probable nicotinate-nucleotide adenylyltransferase from Corynebacterium kroppenstedtii (strain DSM 44385 / JCM 11950 / CIP 105744 / CCUG 35717).